A 131-amino-acid polypeptide reads, in one-letter code: Calvin cycle protein CP12-2, chloroplastic (131 aa).

Residues 1–53 (MATIATGLNIATQRVFVTSENRPVCLAGPVHLNNSWNLGSRTTNRMMKLQPIK) constitute a chloroplast transit peptide. 2 disulfide bridges follow: Cys75–Cys84 and Cys117–Cys126. Positions 97 to 131 (AASHARDKKKADGSDPLEEYCKDNPETNECRTYDN) are disordered. Residues 105 to 131 (KKADGSDPLEEYCKDNPETNECRTYDN) are compositionally biased toward basic and acidic residues.

Belongs to the CP12 family. As to quaternary structure, monomer. Component of a complex that contains two dimers of PRK, two tetramers of GAPDH and CP12. CP12 associates with GAPDH, causing its conformation to change. This GAPDH/CP12 complex binds PRK to form a half-complex (one unit). This unit probably dimerizes due partially to interactions between the enzymes of each unit. Post-translationally, contains two disulfide bonds; only the oxidized protein, with two disulfide bonds, is active in complex formation. The C-terminal disulfide is involved in the interaction with GAPDH and the N-terminal disulfide mediates the binding of PRK with this binary complex. Mostly expressed in cotyledons, leaves and flower stalks, and, to a lower extent, in flowers and stems. Barely detectable in roots and siliques.

It is found in the plastid. Its subcellular location is the chloroplast. In terms of biological role, acts as a linker essential in the assembly of a core complex of PRK/GAPDH. Coordinates the reversible inactivation of chloroplast enzymes GAPDH and PRK during darkness in photosynthetic tissues. In Arabidopsis thaliana (Mouse-ear cress), this protein is Calvin cycle protein CP12-2, chloroplastic (CP12-2).